Here is a 322-residue protein sequence, read N- to C-terminus: ADP,ATP carrier protein (322 aa).

3 Solcar repeats span residues 25-118, 130-222, and 230-316; these read STFF…FKKM, KWFA…LKPV, and GNFL…VQLL. 5 helical membrane-spanning segments follow: residues 27–54, 95–119, 128–148, 198–219, and 233–253; these read FFFD…VKLL, TANV…KKMF, YAKW…ASLL, FGPS…YDTL, and LASF…SYPL. The ADP site is built by Arg100 and Lys112. An ADP-binding site is contributed by Arg257. The interval 257-262 is important for transport activity; that stretch reads RRRMMM. The Nucleotide carrier signature motif signature appears at 257–262; it reads RRRMMM. Residues 293-313 traverse the membrane as a helical segment; it reads AGANILRGVAGAGVLSIYDQV.

This sequence belongs to the mitochondrial carrier (TC 2.A.29) family. In terms of assembly, monomer.

Its subcellular location is the mitochondrion inner membrane. The enzyme catalyses ADP(in) + ATP(out) = ADP(out) + ATP(in). Its activity is regulated as follows. The matrix-open state (m-state) is inhibited by the membrane-permeable bongkrekic acid (BKA). The cytoplasmic-open state (c-state) is inhibited by the membrane-impermeable toxic inhibitor carboxyatractyloside (CATR). Functionally, ADP:ATP antiporter that mediates import of ADP into the mitochondrial matrix for ATP synthesis, and export of ATP out to fuel the cell. Cycles between the cytoplasmic-open state (c-state) and the matrix-open state (m-state): operates by the alternating access mechanism with a single substrate-binding site intermittently exposed to either the cytosolic (c-state) or matrix (m-state) side of the inner mitochondrial membrane. In Schizosaccharomyces pombe (strain 972 / ATCC 24843) (Fission yeast), this protein is ADP,ATP carrier protein (anc1).